A 113-amino-acid chain; its full sequence is Hydrogenase maturation factor HypA (113 aa).

H2 is a binding site for Ni(2+). Zn(2+) is bound by residues C73, C76, C89, and C92.

It belongs to the HypA/HybF family.

In terms of biological role, involved in the maturation of [NiFe] hydrogenases. Required for nickel insertion into the metal center of the hydrogenase. The protein is Hydrogenase maturation factor HypA of Xanthobacter autotrophicus (strain ATCC BAA-1158 / Py2).